Here is a 404-residue protein sequence, read N- to C-terminus: Probable tRNA sulfurtransferase (404 aa).

Residues 60–165 (QPIVEALKLV…DEAAYISYEE (106 aa)) form the THUMP domain. ATP-binding positions include 183–184 (ML), 208–209 (HF), R265, G287, and Q296.

It belongs to the ThiI family.

It is found in the cytoplasm. It catalyses the reaction [ThiI sulfur-carrier protein]-S-sulfanyl-L-cysteine + a uridine in tRNA + 2 reduced [2Fe-2S]-[ferredoxin] + ATP + H(+) = [ThiI sulfur-carrier protein]-L-cysteine + a 4-thiouridine in tRNA + 2 oxidized [2Fe-2S]-[ferredoxin] + AMP + diphosphate. It carries out the reaction [ThiS sulfur-carrier protein]-C-terminal Gly-Gly-AMP + S-sulfanyl-L-cysteinyl-[cysteine desulfurase] + AH2 = [ThiS sulfur-carrier protein]-C-terminal-Gly-aminoethanethioate + L-cysteinyl-[cysteine desulfurase] + A + AMP + 2 H(+). Its pathway is cofactor biosynthesis; thiamine diphosphate biosynthesis. Catalyzes the ATP-dependent transfer of a sulfur to tRNA to produce 4-thiouridine in position 8 of tRNAs, which functions as a near-UV photosensor. Also catalyzes the transfer of sulfur to the sulfur carrier protein ThiS, forming ThiS-thiocarboxylate. This is a step in the synthesis of thiazole, in the thiamine biosynthesis pathway. The sulfur is donated as persulfide by IscS. The protein is Probable tRNA sulfurtransferase of Streptococcus pyogenes serotype M3 (strain ATCC BAA-595 / MGAS315).